A 145-amino-acid polypeptide reads, in one-letter code: MRKGERMLATSKEWERPRPVEASCSEGVLKVLKGCRTILKGNRHDSLYILQGSVETGESNLAETAKDETRLWHSRLAHMSQRGMELLVKKGFLDSSKVSSLKFCEDCIYGKTHRVNFSTGQHTTKNPLDYVHSDLWGAPSVPLSF.

It is found in the mitochondrion. This is an uncharacterized protein from Arabidopsis thaliana (Mouse-ear cress).